Consider the following 39-residue polypeptide: Natriuretic peptide TNPc (39 aa).

C9 and C25 are joined by a disulfide.

It belongs to the natriuretic peptide family. As to expression, expressed by the venom gland.

It localises to the secreted. Functionally, snake venom natriuretic peptide that exhibits vasoactive and hypotensive activity. Produces a near complete relaxation in pre-contracted aortae by activating the natriuretic peptide receptor 1 (NPR1). Stimulates cGMP production through the natriuretic peptide receptor 1 (NPR1) with high potencies for the rat NPR1 (EC(50)=100 nM), and very weak potencies over human NPR1 (28% activation at 10 uM). In vivo, reduces both systolic and diastolic blood pressure with no effect on heart rate, when intravenously injected in conscious rabbits. Also enhances the bradycardia due to cardiac afferent stimulation (Bezold-Jarisch reflex). The protein is Natriuretic peptide TNPc of Oxyuranus microlepidotus (Inland taipan).